Reading from the N-terminus, the 320-residue chain is o-succinylbenzoate synthase (320 aa).

The active-site Proton donor is the Lys133. Mg(2+) is bound by residues Asp161, Glu190, and Asp213. The active-site Proton acceptor is Lys235.

It belongs to the mandelate racemase/muconate lactonizing enzyme family. MenC type 1 subfamily. Requires a divalent metal cation as cofactor.

The catalysed reaction is (1R,6R)-6-hydroxy-2-succinyl-cyclohexa-2,4-diene-1-carboxylate = 2-succinylbenzoate + H2O. It participates in quinol/quinone metabolism; 1,4-dihydroxy-2-naphthoate biosynthesis; 1,4-dihydroxy-2-naphthoate from chorismate: step 4/7. The protein operates within quinol/quinone metabolism; menaquinone biosynthesis. In terms of biological role, converts 2-succinyl-6-hydroxy-2,4-cyclohexadiene-1-carboxylate (SHCHC) to 2-succinylbenzoate (OSB). The sequence is that of o-succinylbenzoate synthase from Shigella boydii serotype 4 (strain Sb227).